The primary structure comprises 338 residues: Large ribosomal subunit protein uL3 (338 aa).

Disordered regions lie at residues 1–44 (MPQP…GFAG), 151–170 (AVPSVPKKKPDVMETRVGGG), 206–259 (VTKG…GQTG), and 312–338 (FRPAVRPNDQPRLDPEVRYVSNESNQG). Residues 22 to 31 (SETPRFNSWP) are compositionally biased toward polar residues. Positions 220–237 (GVQKRKGKHARQGWRRRI) are enriched in basic residues. Residues 247 to 259 (RVRSTVPQQGQTG) show a composition bias toward polar residues.

It belongs to the universal ribosomal protein uL3 family. In terms of assembly, part of the 50S ribosomal subunit. Forms a cluster with proteins L14 and L24e. Interacts weakly with protein L13.

In terms of biological role, one of the primary rRNA binding proteins, it binds directly near the 3'-end of the 23S rRNA, where it nucleates assembly of the 50S subunit. In Haloarcula marismortui (strain ATCC 43049 / DSM 3752 / JCM 8966 / VKM B-1809) (Halobacterium marismortui), this protein is Large ribosomal subunit protein uL3 (rpl3).